The chain runs to 417 residues: Serine hydroxymethyltransferase (417 aa).

Residues leucine 121 and 125–127 contribute to the (6S)-5,6,7,8-tetrahydrofolate site; that span reads GHL. The residue at position 229 (lysine 229) is an N6-(pyridoxal phosphate)lysine. 355-357 lines the (6S)-5,6,7,8-tetrahydrofolate pocket; the sequence is SPF.

The protein belongs to the SHMT family. Homodimer. The cofactor is pyridoxal 5'-phosphate.

The protein localises to the cytoplasm. The catalysed reaction is (6R)-5,10-methylene-5,6,7,8-tetrahydrofolate + glycine + H2O = (6S)-5,6,7,8-tetrahydrofolate + L-serine. Its pathway is one-carbon metabolism; tetrahydrofolate interconversion. It participates in amino-acid biosynthesis; glycine biosynthesis; glycine from L-serine: step 1/1. Functionally, catalyzes the reversible interconversion of serine and glycine with tetrahydrofolate (THF) serving as the one-carbon carrier. This reaction serves as the major source of one-carbon groups required for the biosynthesis of purines, thymidylate, methionine, and other important biomolecules. Also exhibits THF-independent aldolase activity toward beta-hydroxyamino acids, producing glycine and aldehydes, via a retro-aldol mechanism. In Yersinia enterocolitica serotype O:8 / biotype 1B (strain NCTC 13174 / 8081), this protein is Serine hydroxymethyltransferase.